The primary structure comprises 300 residues: Glutamyl-Q tRNA(Asp) synthetase (300 aa).

Residues 14 to 18 (RFAPT) and Glu-50 contribute to the L-glutamate site. The short motif at 17–27 (PTPSGFLHFGS) is the 'HIGH' region element. The Zn(2+) site is built by Cys-106, Cys-108, Tyr-120, and Cys-124. L-glutamate-binding residues include Tyr-177 and Arg-195. The 'KMSKS' region motif lies at 233–237 (KLGKS). Lys-236 contacts ATP.

Belongs to the class-I aminoacyl-tRNA synthetase family. GluQ subfamily. The cofactor is Zn(2+).

Its function is as follows. Catalyzes the tRNA-independent activation of glutamate in presence of ATP and the subsequent transfer of glutamate onto a tRNA(Asp). Glutamate is transferred on the 2-amino-5-(4,5-dihydroxy-2-cyclopenten-1-yl) moiety of the queuosine in the wobble position of the QUC anticodon. This chain is Glutamyl-Q tRNA(Asp) synthetase, found in Pseudomonas putida (strain ATCC 700007 / DSM 6899 / JCM 31910 / BCRC 17059 / LMG 24140 / F1).